Reading from the N-terminus, the 60-residue chain is Large ribosomal subunit protein bL32 (60 aa).

Residues 1-16 show a composition bias toward basic residues; that stretch reads MAVPKRKTSPSKRGMR. The interval 1–60 is disordered; that stretch reads MAVPKRKTSPSKRGMRRSADALKAPTYVEDKNSGEMRRPHHIDLKTGMYRGRQVLTPKES. Basic and acidic residues predominate over residues 28 to 44; the sequence is VEDKNSGEMRRPHHIDL.

It belongs to the bacterial ribosomal protein bL32 family.

This chain is Large ribosomal subunit protein bL32, found in Mesorhizobium japonicum (strain LMG 29417 / CECT 9101 / MAFF 303099) (Mesorhizobium loti (strain MAFF 303099)).